The following is a 72-amino-acid chain: VKRPMNAFMVWSQNERRKIMDQWPDMHNAEISKRLGRPWQLLQDSEKIPFVKEAGRLRVKHMADYPNYKYRP.

A DNA-binding region (HMG box) is located at residues 1 to 69 (VKRPMNAFMV…KHMADYPNYK (69 aa)).

Its subcellular location is the nucleus. This chain is SRY-related protein MG42, found in Tarentola mauritanica (Common wall gecko).